The primary structure comprises 232 residues: LexA repressor (232 aa).

Residues 36–56 constitute a DNA-binding region (H-T-H motif); the sequence is IREIGDAAGLQSTSSVAYQLK. A compositionally biased stretch (basic and acidic residues) spans 62–86; that stretch reads GFLRRDPNKPRAVDVRHLPETDNRT. A disordered region spans residues 62-107; sequence GFLRRDPNKPRAVDVRHLPETDNRTKAGPKAKARPTAGASPQPELA. Catalysis depends on for autocatalytic cleavage activity residues S156 and K193.

This sequence belongs to the peptidase S24 family. As to quaternary structure, homodimer.

It carries out the reaction Hydrolysis of Ala-|-Gly bond in repressor LexA.. In terms of biological role, represses a number of genes involved in the response to DNA damage (SOS response), including recA and lexA. In the presence of single-stranded DNA, RecA interacts with LexA causing an autocatalytic cleavage which disrupts the DNA-binding part of LexA, leading to derepression of the SOS regulon and eventually DNA repair. This chain is LexA repressor, found in Corynebacterium efficiens (strain DSM 44549 / YS-314 / AJ 12310 / JCM 11189 / NBRC 100395).